A 201-amino-acid chain; its full sequence is Protease (201 aa).

Catalysis depends on residues His-55, Asp-72, and Cys-122.

Belongs to the peptidase C5 family. Interacts with protease cofactor pVI-C; this interaction is necessary for protease activation.

It is found in the virion. The protein localises to the host nucleus. It carries out the reaction Cleaves proteins of the adenovirus and its host cell at two consensus sites: -Yaa-Xaa-Gly-Gly-|-Xaa- and -Yaa-Xaa-Gly-Xaa-|-Gly- (in which Yaa is Met, Ile or Leu, and Xaa is any amino acid).. Its activity is regulated as follows. Requires DNA and protease cofactor for maximal activation. Inside nascent virions, becomes partially activated by binding to the viral DNA, allowing it to cleave the cofactor that binds to the protease and fully activates it. Actin, like the viral protease cofactor, seems to act as a cofactor in the cleavage of cytokeratin 18 and of actin itself. In terms of biological role, cleaves viral precursor proteins (pTP, pIIIa, pVI, pVII, pVIII, and pX) inside newly assembled particles giving rise to mature virions. Protease complexed to its cofactor slides along the viral DNA to specifically locate and cleave the viral precursors. Mature virions have a weakened organization compared to the unmature virions, thereby facilitating subsequent uncoating. Without maturation, the particle lacks infectivity and is unable to uncoat. Late in adenovirus infection, in the cytoplasm, may participate in the cytoskeleton destruction. Cleaves host cell cytoskeletal keratins K7 and K18. The polypeptide is Protease (Bovine adenovirus 4 (BAdV-4)).